The following is a 404-amino-acid chain: Cysteine desulfurase IscS (404 aa).

Residues 75–76, asparagine 155, glutamine 183, and 203–205 each bind pyridoxal 5'-phosphate; these read AT and SGH. An N6-(pyridoxal phosphate)lysine modification is found at lysine 206. Threonine 243 lines the pyridoxal 5'-phosphate pocket. Cysteine 328 serves as the catalytic Cysteine persulfide intermediate. Residue cysteine 328 coordinates [2Fe-2S] cluster.

Belongs to the class-V pyridoxal-phosphate-dependent aminotransferase family. NifS/IscS subfamily. In terms of assembly, homodimer. Forms a heterotetramer with IscU, interacts with other sulfur acceptors. Pyridoxal 5'-phosphate is required as a cofactor.

The protein resides in the cytoplasm. The enzyme catalyses (sulfur carrier)-H + L-cysteine = (sulfur carrier)-SH + L-alanine. It functions in the pathway cofactor biosynthesis; iron-sulfur cluster biosynthesis. Its function is as follows. Master enzyme that delivers sulfur to a number of partners involved in Fe-S cluster assembly, tRNA modification or cofactor biosynthesis. Catalyzes the removal of elemental sulfur atoms from cysteine to produce alanine. Functions as a sulfur delivery protein for Fe-S cluster synthesis onto IscU, an Fe-S scaffold assembly protein, as well as other S acceptor proteins. The protein is Cysteine desulfurase IscS of Pectobacterium atrosepticum (strain SCRI 1043 / ATCC BAA-672) (Erwinia carotovora subsp. atroseptica).